A 206-amino-acid chain; its full sequence is Small ribosomal subunit protein uS4 (206 aa).

In terms of domain architecture, S4 RNA-binding spans 96 to 158 (GRLDNVVYRM…AKQQSRIKAA (63 aa)).

Belongs to the universal ribosomal protein uS4 family. In terms of assembly, part of the 30S ribosomal subunit. Contacts protein S5. The interaction surface between S4 and S5 is involved in control of translational fidelity.

Functionally, one of the primary rRNA binding proteins, it binds directly to 16S rRNA where it nucleates assembly of the body of the 30S subunit. In terms of biological role, with S5 and S12 plays an important role in translational accuracy. This chain is Small ribosomal subunit protein uS4, found in Vibrio atlanticus (strain LGP32) (Vibrio splendidus (strain Mel32)).